We begin with the raw amino-acid sequence, 862 residues long: DNA gyrase subunit A (862 aa).

The Topo IIA-type catalytic domain occupies 38-501; that stretch reads LPDARDGLKP…DYDDIDVEDL (464 aa). The O-(5'-phospho-DNA)-tyrosine intermediate role is filled by Y126. The GyrA-box signature appears at 528–534; sequence QKRGGKG. Residues 843 to 862 form a disordered region; that stretch reads KEESDDDDIVADDTQEQDME. Residues 845 to 862 show a composition bias toward acidic residues; the sequence is ESDDDDIVADDTQEQDME.

It belongs to the type II topoisomerase GyrA/ParC subunit family. In terms of assembly, heterotetramer, composed of two GyrA and two GyrB chains. In the heterotetramer, GyrA contains the active site tyrosine that forms a transient covalent intermediate with DNA, while GyrB binds cofactors and catalyzes ATP hydrolysis.

The protein resides in the cytoplasm. It catalyses the reaction ATP-dependent breakage, passage and rejoining of double-stranded DNA.. In terms of biological role, a type II topoisomerase that negatively supercoils closed circular double-stranded (ds) DNA in an ATP-dependent manner to modulate DNA topology and maintain chromosomes in an underwound state. Negative supercoiling favors strand separation, and DNA replication, transcription, recombination and repair, all of which involve strand separation. Also able to catalyze the interconversion of other topological isomers of dsDNA rings, including catenanes and knotted rings. Type II topoisomerases break and join 2 DNA strands simultaneously in an ATP-dependent manner. In Campylobacter fetus, this protein is DNA gyrase subunit A.